The primary structure comprises 483 residues: FAD-linked oxidoreductase easE (483 aa).

The region spanning 10 to 193 (QGRLPFYSAV…TEATVRVFSD (184 aa)) is the FAD-binding PCMH-type domain.

The protein belongs to the oxygen-dependent FAD-linked oxidoreductase family. The cofactor is FAD.

The protein operates within alkaloid biosynthesis; ergot alkaloid biosynthesis. Functionally, FAD-linked oxidoreductase; part of the gene cluster that mediates the biosynthesis of fungal ergot alkaloid. DmaW catalyzes the first step of ergot alkaloid biosynthesis by condensing dimethylallyl diphosphate (DMAP) and tryptophan to form 4-dimethylallyl-L-tryptophan. The second step is catalyzed by the methyltransferase easF that methylates 4-dimethylallyl-L-tryptophan in the presence of S-adenosyl-L-methionine, resulting in the formation of 4-dimethylallyl-L-abrine. The catalase easC and the FAD-dependent oxidoreductase easE then transform 4-dimethylallyl-L-abrine to chanoclavine-I which is further oxidized by easD in the presence of NAD(+), resulting in the formation of chanoclavine-I aldehyde. Agroclavine dehydrogenase easG then mediates the conversion of chanoclavine-I aldehyde to agroclavine via a non-enzymatic adduct reaction: the substrate is an iminium intermediate that is formed spontaneously from chanoclavine-I aldehyde in the presence of glutathione. The presence of easA is not required to complete this reaction. Further conversion of agroclavine to paspalic acid is a two-step process involving oxidation of agroclavine to elymoclavine and of elymoclavine to paspalic acid, the second step being performed by the elymoclavine oxidase cloA. Paspalic acid is then further converted to D-lysergic acid. Ergopeptines are assembled from D-lysergic acid and three different amino acids by the D-lysergyl-peptide-synthetases composed each of a monomudular and a trimodular nonribosomal peptide synthetase subunit. LpsB and lpsC encode the monomodular subunits responsible for D-lysergic acid activation and incorporation into the ergopeptine backbone. LpsA1 and A2 subunits encode the trimodular nonribosomal peptide synthetase assembling the tripeptide portion of ergopeptines. LpsA1 is responsible for formation of the major ergopeptine, ergotamine, and lpsA2 for alpha-ergocryptine, the minor ergopeptine of the total alkaloid mixture elaborated by C.purpurea. D-lysergyl-tripeptides are assembled by the nonribosomal peptide synthetases and released as N-(D-lysergyl-aminoacyl)-lactams. Cyclolization of the D-lysergyl-tripeptides is performed by the Fe(2+)/2-ketoglutarate-dependent dioxygenase easH which introduces a hydroxyl group into N-(D-lysergyl-aminoacyl)-lactam at alpha-C of the aminoacyl residue followed by spontaneous condensation with the terminal lactam carbonyl group. The protein is FAD-linked oxidoreductase easE of Claviceps purpurea (strain 20.1) (Ergot fungus).